Reading from the N-terminus, the 68-residue chain is Large ribosomal subunit protein uL29 (68 aa).

This sequence belongs to the universal ribosomal protein uL29 family.

In Pyrococcus horikoshii (strain ATCC 700860 / DSM 12428 / JCM 9974 / NBRC 100139 / OT-3), this protein is Large ribosomal subunit protein uL29 (rpl29).